The chain runs to 632 residues: tRNA endonuclease VMS1 (632 aa).

The C2H2-type zinc-finger motif lies at 72–96 (MRCSVCQMSFDSRNEQKAHYQTDYH). The interval 123-155 (HGIKSEDENSGGEQTSSDHEESEEASDRDPDLQ) is disordered. The region spanning 232-392 (PMAISALFMV…KKAWCELSYL (161 aa)) is the VLRF1 domain. Residue Gln-295 is part of the active site. ANK repeat units lie at residues 470–500 (LTPT…DPTI) and 504–530 (LGRT…NLGE). 2 coiled-coil regions span residues 544 to 582 (LSRE…QRFA) and 608 to 632 (TDEQ…KKKY). The span at 578–589 (KQRFAKDAERGP) shows a compositional bias: basic and acidic residues. The disordered stretch occupies residues 578-632 (KQRFAKDAERGPGKKLTNIPSIQQQNLNSLTDEQRRRLMREQRARAAEERMKKKY). Residues 595–608 (NIPSIQQQNLNSLT) show a composition bias toward polar residues. A compositionally biased stretch (basic and acidic residues) spans 609 to 632 (DEQRRRLMREQRARAAEERMKKKY).

Belongs to the ANKZF1/VMS1 family. As to quaternary structure, associates with 60S ribosomal subunit. Interacts with CDC48. Interacts with NPL4.

The protein localises to the cytoplasm. The protein resides in the mitochondrion. Its subcellular location is the endoplasmic reticulum membrane. Endonuclease that cleaves polypeptidyl-tRNAs downstream of the ribosome-associated quality control (RQC) pathway to release incompletely synthesized polypeptides for degradation. The RQC pathway disassembles aberrantly stalled translation complexes to recycle or degrade the constituent parts. VMS1 acts downstream disassembly of stalled ribosomes and specifically cleaves off the terminal 3'-CCA nucleotides universal to all tRNAs from polypeptidyl-tRNAs, releasing (1) ubiquitinated polypeptides from 60S ribosomal subunit for degradation by the ERAD pathway and (2) cleaved tRNAs for recycling. Component of an evolutionarily conserved system for ubiquitin-mediated mitochondria-associated protein degradation (MAD), which is necessary to maintain mitochondrial, cellular, and organismal viability. This is tRNA endonuclease VMS1 from Saccharomyces cerevisiae (strain ATCC 204508 / S288c) (Baker's yeast).